We begin with the raw amino-acid sequence, 160 residues long: Ribonuclease P protein component 2 (160 aa).

Belongs to the eukaryotic/archaeal RNase P protein component 2 family. As to quaternary structure, consists of a catalytic RNA component and at least 4-5 protein subunits.

It is found in the cytoplasm. It carries out the reaction Endonucleolytic cleavage of RNA, removing 5'-extranucleotides from tRNA precursor.. Part of ribonuclease P, a protein complex that generates mature tRNA molecules by cleaving their 5'-ends. This Methanoculleus marisnigri (strain ATCC 35101 / DSM 1498 / JR1) protein is Ribonuclease P protein component 2.